The chain runs to 690 residues: MSSKGDLSKCRNIGIMAHIDAGKTTTTERILFYTGKQNRIGEVHEGAASMDWMEQEKERGITITSAATTCFWNGCRINIIDTPGHVDFTVEVERSLRVLDGAVAVFDGVAGVEPQSETVWRQADRYDVPRICFVNKMDRVGADFYTCVDMIVDRLGAVPLVLQLPIGVDKGFVGVVDLVEMRSIIWEEDSLGAKFHYGDIPEGMLEEANKYRSKLVETAVEVDDEAMSMYLDGQDISVSLLKKCIRAGVIGSNFVPVLCGSAFKNKGVQPLLDAVVDYLPSPNDIPTIEGVSAKDPDQVMQITTSEDGKFVALAFKVMVDRFVGSLTFVRVYSGKLTGKSVVLNSSKGHTESVGRILLMHANNREDISEVKAGDIAALAGLKKTTTGDTLCDQNFPVILEKMDFPESVMELAIEPVSTADQEKMGMALSRLVAEDPSLKVFVNNESGQTILKGMGELHLEIIVDRMRREFGVEASVGAPQVAYRETITKAAEVEYIHKKQTGGAGQFAKVNILFEPLPPGSGFEFENKITCGAIPKEYIPGIQNGLELIKETGIIAGFPLIDFKATLFDGAFHEVDSSPLAFELAAKGAFREMASKAAPVLLEPIMRVEIITPDEYMGDVIGDINSRRGKVSEMQDRHNAKLITAFIPLSSMFGYVKDLRSMSQGRAQYSMFFARYERVPENVVVNDVKR.

The region spanning 8–283 (SKCRNIGIMA…AVVDYLPSPN (276 aa)) is the tr-type G domain. Residues 17–24 (AHIDAGKT), 81–85 (DTPGH), and 135–138 (NKMD) contribute to the GTP site.

The protein belongs to the TRAFAC class translation factor GTPase superfamily. Classic translation factor GTPase family. EF-G/EF-2 subfamily.

It is found in the cytoplasm. Its function is as follows. Catalyzes the GTP-dependent ribosomal translocation step during translation elongation. During this step, the ribosome changes from the pre-translocational (PRE) to the post-translocational (POST) state as the newly formed A-site-bound peptidyl-tRNA and P-site-bound deacylated tRNA move to the P and E sites, respectively. Catalyzes the coordinated movement of the two tRNA molecules, the mRNA and conformational changes in the ribosome. This chain is Elongation factor G, found in Anaplasma phagocytophilum (strain HZ).